The sequence spans 61 residues: Metallothionein-1A (61 aa).

Met-1 is subject to N-acetylmethionine. Residues 1–29 (MDPNCSCATGGSCTCTGSCKCKECKCTSC) are beta. Residues Cys-5, Cys-7, Cys-13, Cys-15, Cys-19, Cys-21, Cys-24, Cys-26, Cys-29, Cys-33, Cys-34, Cys-36, Cys-37, Cys-41, Cys-44, Cys-48, Cys-50, and Cys-57 each coordinate a divalent metal cation. The interval 30 to 61 (KKSCCSCCPMSCAKCAQGCICKGASEKCSCCA) is alpha. Position 58 is a phosphoserine (Ser-58). Positions 59 and 60 each coordinate a divalent metal cation.

The protein belongs to the metallothionein superfamily. Type 1 family. Monomer.

Its function is as follows. Metallothioneins have a high content of cysteine residues that bind various heavy metals; these proteins are transcriptionally regulated by both heavy metals and glucocorticoids. This chain is Metallothionein-1A (MT1A), found in Homo sapiens (Human).